The chain runs to 296 residues: Large ribosomal subunit protein uL15m (296 aa).

The transit peptide at 1-20 directs the protein to the mitochondrion; sequence MSLIKKPGGKTIEVVKNLPR. Residues 25–59 are disordered; the sequence is NLRPNPGAKTLEKRRGRGMHGGNRSGWGHKGERQR.

This sequence belongs to the universal ribosomal protein uL15 family. In terms of assembly, component of the mitochondrial ribosome large subunit (39S) which comprises a 16S rRNA and about 50 distinct proteins.

The protein resides in the mitochondrion. This Danio rerio (Zebrafish) protein is Large ribosomal subunit protein uL15m (mrpl15).